A 748-amino-acid chain; its full sequence is Cysteine--tRNA ligase, cytoplasmic (748 aa).

Positions 1–25 (MAGSSGQQGKGRRVQPQWSPPAGTQ) are disordered. Position 2 is an N-acetylalanine (alanine 2). Serine 19 bears the Phosphoserine mark. Cysteine 55 is a Zn(2+) binding site. Glycine 56 provides a ligand contact to L-cysteine. The short motif at 57 to 67 (PTVYDASHMGH) is the 'HIGH' region element. Threonine 96 lines the L-cysteine pocket. Positions 101–104 (KIIK) match the 'KIIK' region motif. A phosphoserine mark is found at serine 305 and serine 307. Residues cysteine 348, histidine 373, and glutamate 377 each contribute to the Zn(2+) site. Residue histidine 373 coordinates L-cysteine. Positions 406–410 (KMSKS) match the 'KMSKS' region motif. Lysine 409 provides a ligand contact to ATP. 2 stretches are compositionally biased toward basic and acidic residues: residues 654–679 (KRQVEEEKRKKKEEAARRKQEQEAAK) and 700–717 (KFDENGLPTHDAEGKELS). Disordered stretches follow at residues 654–686 (KRQVEEEKRKKKEEAARRKQEQEAAKLAKMKIP) and 700–721 (KFDENGLPTHDAEGKELSKGQA). Serine 746 carries the post-translational modification Phosphoserine.

Homodimer. Requires Zn(2+) as cofactor.

It is found in the cytoplasm. It catalyses the reaction tRNA(Cys) + L-cysteine + ATP = L-cysteinyl-tRNA(Cys) + AMP + diphosphate. Functionally, catalyzes the ATP-dependent ligation of cysteine to tRNA(Cys). This is Cysteine--tRNA ligase, cytoplasmic (CARS1) from Macaca fascicularis (Crab-eating macaque).